The following is a 158-amino-acid chain: GTP-dependent dephospho-CoA kinase (158 aa).

Residues aspartate 35, valine 36, aspartate 54, lysine 56, glutamate 109, and aspartate 132 each coordinate GTP.

Belongs to the GTP-dependent DPCK family.

It carries out the reaction 3'-dephospho-CoA + GTP = GDP + CoA + H(+). Its pathway is cofactor biosynthesis; coenzyme A biosynthesis. Functionally, catalyzes the GTP-dependent phosphorylation of the 3'-hydroxyl group of dephosphocoenzyme A to form coenzyme A (CoA). The sequence is that of GTP-dependent dephospho-CoA kinase from Methanococcus vannielii (strain ATCC 35089 / DSM 1224 / JCM 13029 / OCM 148 / SB).